A 320-amino-acid polypeptide reads, in one-letter code: MKSVRGFASATVGNVACGFDILGFAITEPGDEVILTRSERKHTGCPVTISSISGDGGKLPLDPRKNTSSFVVLKFLEHIRTHKGQDCTGHISLELKKHLPLSSGMGSSAASAAAALAAANELLGRPCTKMELVHFAIEGERVACGSAHADNAAPAILGNFVLIRSYTPLDLIVIPPPEKLFCSLVHPHTELRTSFARSVLPTDITLKDATRQWGNVGALVAGLLTSDYALVGRSLVDVVAEPKRAPLIPGFAEVKEAALNAGALGCSIAGSGPSIFAFSDSAETAHAAGEAMQKAFLASKKSLKSDMWVSPICREGARIL.

100 to 110 (PLSSGMGSSAA) is an ATP binding site.

This sequence belongs to the GHMP kinase family. Homoserine kinase subfamily.

Its subcellular location is the cytoplasm. It carries out the reaction L-homoserine + ATP = O-phospho-L-homoserine + ADP + H(+). It functions in the pathway amino-acid biosynthesis; L-threonine biosynthesis; L-threonine from L-aspartate: step 4/5. Functionally, catalyzes the ATP-dependent phosphorylation of L-homoserine to L-homoserine phosphate. The protein is Homoserine kinase of Chlorobium phaeovibrioides (strain DSM 265 / 1930) (Prosthecochloris vibrioformis (strain DSM 265)).